Reading from the N-terminus, the 496-residue chain is uncharacterized protein (496 aa).

13 helical membrane passes run 5 to 25, 45 to 65, 77 to 97, 127 to 147, 161 to 181, 193 to 213, 239 to 259, 278 to 298, 325 to 345, 374 to 394, 396 to 416, 424 to 444, and 450 to 470; these read LTAL…GFLA, FGGL…YTFL, VAFF…FFLP, LVAI…LSGI, VKFV…FSGI, ILVW…HFNG, IPWF…WAHA, FLPL…IAFL, FAYA…AIGA, MVFV…TALV, LQLL…VSLF, ATVI…ITQS, and EGFW…PLFV.

It belongs to the sodium:solute symporter (SSF) (TC 2.A.21) family.

It is found in the cell membrane. This is an uncharacterized protein from Bacillus subtilis (strain 168).